Reading from the N-terminus, the 188-residue chain is Putative manganese efflux pump MntP (188 aa).

Helical transmembrane passes span 3 to 23, 41 to 61, 62 to 82, 107 to 129, 143 to 163, and 168 to 188; these read LSAT…ASIG, LIFG…GMLA, SQFV…FLGG, LLVT…LAFL, ATFL…PLLG, and ILGG…HFAG.

This sequence belongs to the MntP (TC 9.B.29) family.

Its subcellular location is the cell inner membrane. Functionally, probably functions as a manganese efflux pump. The protein is Putative manganese efflux pump MntP of Klebsiella pneumoniae (strain 342).